A 326-amino-acid chain; its full sequence is tRNA-modifying protein YgfZ (326 aa).

The folate site is built by W27 and W189.

Belongs to the tRNA-modifying YgfZ family.

The protein resides in the cytoplasm. In terms of biological role, folate-binding protein involved in regulating the level of ATP-DnaA and in the modification of some tRNAs. It is probably a key factor in regulatory networks that act via tRNA modification, such as initiation of chromosomal replication. The polypeptide is tRNA-modifying protein YgfZ (Salmonella paratyphi A (strain AKU_12601)).